The following is a 217-amino-acid chain: Translation initiation factor IF-3 (217 aa).

The tract at residues 170–217 is disordered; the sequence is KKTEAMAEARQAQEARKADAKANPGKSQNAAETDDAEAEAPAEAPAEA. The segment covering 172 to 189 has biased composition (basic and acidic residues); sequence TEAMAEARQAQEARKADA.

This sequence belongs to the IF-3 family. As to quaternary structure, monomer.

The protein resides in the cytoplasm. In terms of biological role, IF-3 binds to the 30S ribosomal subunit and shifts the equilibrium between 70S ribosomes and their 50S and 30S subunits in favor of the free subunits, thus enhancing the availability of 30S subunits on which protein synthesis initiation begins. This is Translation initiation factor IF-3 from Streptomyces coelicolor (strain ATCC BAA-471 / A3(2) / M145).